A 319-amino-acid polypeptide reads, in one-letter code: tRNA-modifying protein YgfZ (319 aa).

Positions 27 and 189 each coordinate folate.

It belongs to the tRNA-modifying YgfZ family.

It is found in the cytoplasm. In terms of biological role, folate-binding protein involved in regulating the level of ATP-DnaA and in the modification of some tRNAs. It is probably a key factor in regulatory networks that act via tRNA modification, such as initiation of chromosomal replication. In Buchnera aphidicola subsp. Acyrthosiphon pisum (strain APS) (Acyrthosiphon pisum symbiotic bacterium), this protein is tRNA-modifying protein YgfZ.